The chain runs to 553 residues: Formate--tetrahydrofolate ligase (553 aa).

An ATP-binding site is contributed by 63-70 (TPAGEGKS).

The protein belongs to the formate--tetrahydrofolate ligase family.

It carries out the reaction (6S)-5,6,7,8-tetrahydrofolate + formate + ATP = (6R)-10-formyltetrahydrofolate + ADP + phosphate. The protein operates within one-carbon metabolism; tetrahydrofolate interconversion. The sequence is that of Formate--tetrahydrofolate ligase from Limosilactobacillus fermentum (strain NBRC 3956 / LMG 18251) (Lactobacillus fermentum).